Reading from the N-terminus, the 617-residue chain is Membrane protein insertase YidC (617 aa).

Residues 8-28 (MFVAIGLSLLVLLGWQYFVAG) traverse the membrane as a helical segment. Polar residues predominate over residues 36–49 (QIEAQNKAAQQQPP). The interval 36–91 (QIEAQNKAAQQQPPGVTPDGVPSPSPKEGGPAAPAPGTLPTAQGGPVSREAALARS) is disordered. Residues 61–81 (PKEGGPAAPAPGTLPTAQGGP) are compositionally biased toward low complexity. The next 4 helical transmembrane spans lie at 387–407 (LFGN…LLFL), 461–481 (WPVL…FITI), 517–533 (FVHL…TMFV), and 549–569 (IFTF…AGLV).

It belongs to the OXA1/ALB3/YidC family. Type 1 subfamily. As to quaternary structure, interacts with the Sec translocase complex via SecD. Specifically interacts with transmembrane segments of nascent integral membrane proteins during membrane integration.

The protein localises to the cell inner membrane. Required for the insertion and/or proper folding and/or complex formation of integral membrane proteins into the membrane. Involved in integration of membrane proteins that insert both dependently and independently of the Sec translocase complex, as well as at least some lipoproteins. Aids folding of multispanning membrane proteins. This Methylobacterium radiotolerans (strain ATCC 27329 / DSM 1819 / JCM 2831 / NBRC 15690 / NCIMB 10815 / 0-1) protein is Membrane protein insertase YidC.